Consider the following 301-residue polypeptide: Protease HtpX (301 aa).

2 helical membrane-spanning segments follow: residues 4–24 (IGLF…ILSL) and 38–58 (LGNL…ISLL). His147 contributes to the Zn(2+) binding site. Residue Glu148 is part of the active site. His151 serves as a coordination point for Zn(2+). A run of 2 helical transmembrane segments spans residues 155–175 (GDMV…MFFA) and 200–220 (FAIT…IVMW). Residue Glu226 coordinates Zn(2+).

This sequence belongs to the peptidase M48B family. The cofactor is Zn(2+).

The protein localises to the cell inner membrane. The protein is Protease HtpX of Acinetobacter baylyi (strain ATCC 33305 / BD413 / ADP1).